A 478-amino-acid polypeptide reads, in one-letter code: Solute carrier family 7 member 13 (478 aa).

Over 1-14 the chain is Cytoplasmic; the sequence is MAMDSKKEIRLKRE. A helical membrane pass occupies residues 15-35; that stretch reads LGYFWGTNFLIINIIGAGIFV. Residues 36 to 47 lie on the Extracellular side of the membrane; sequence SPKGVLQHSSMN. A helical membrane pass occupies residues 48–68; the sequence is VGVSLCVWAVCAVLTLTSALC. Topologically, residues 69–89 are cytoplasmic; it reads SAEIGITFPYSGAHYYFLKRC. Residues 90 to 110 traverse the membrane as a helical segment; that stretch reads FGPLVAFLRLWTSLFLGPGLI. Residues 111-129 lie on the Extracellular side of the membrane; sequence ASQALLLAEYGVQPFYPSC. A helical membrane pass occupies residues 130–150; that stretch reads SAPILPRKCLALAMLWIVGIL. The Cytoplasmic portion of the chain corresponds to 151-163; the sequence is NSRGVKELSWLQT. A helical membrane pass occupies residues 164 to 184; sequence VSSVLKVGILGVISLSGLFLL. Over 185–208 the chain is Extracellular; it reads VRGKKENVQRLQNAFDAEFPEVSQ. A helical transmembrane segment spans residues 209-229; the sequence is LIEAIFQGYFAFSGGGCFTCI. The Cytoplasmic portion of the chain corresponds to 230–242; the sequence is AGELKKPSKTIPR. A helical transmembrane segment spans residues 243–263; the sequence is CIFTGLPLVTVVYLLANISYL. Over 264–288 the chain is Extracellular; it reads TVLTPQEMLSSDAVALTWTDRVIPQ. The chain crosses the membrane as a helical span at residues 289 to 309; it reads FTWTVPFAISASLFINLVINV. Over 310-338 the chain is Cytoplasmic; the sequence is LETSRVLYIASENGQLPLLFCALNVHSSP. Residues 339-359 form a helical membrane-spanning segment; it reads FIAVLLIISMASILIVLTNLI. Position 360 (D360) is a topological domain, extracellular. The helical transmembrane segment at 361-381 threads the bilayer; sequence LINYLYFVVSIWTALSIIGIL. Residues 382-395 lie on the Cytoplasmic side of the membrane; that stretch reads KLRYQEPNLHRPYK. A helical transmembrane segment spans residues 396 to 416; it reads VFLPFTFIALGITLSLVLIPL. At 417–423 the chain is on the extracellular side; that stretch reads VKSPKLH. The helical transmembrane segment at 424–444 threads the bilayer; sequence YIYVFLFLLSGLVFYVPLIHF. The Cytoplasmic portion of the chain corresponds to 445-478; the sequence is KVKFVWFQKLTCYLQLLFNICIPDVSDDHIHEES.

This sequence belongs to the amino acid-polyamine-organocation (APC) superfamily. Disulfide-linked heterodimer composed of the catalytic light subunit SLC7A13 and the heavy subunit SLC3A1. As to expression, expressed in renal tubules in the outer stripe of the outer medulla and medullary ray (at protein level). Detected in male but not in female kidney.

It is found in the apical cell membrane. The catalysed reaction is L-cystine(out) + L-aspartate(in) = L-cystine(in) + L-aspartate(out). The enzyme catalyses L-cystine(out) = L-cystine(in). It catalyses the reaction L-aspartate(in) + L-glutamate(out) = L-aspartate(out) + L-glutamate(in). It carries out the reaction L-aspartate(in) + L-glutamine(out) = L-aspartate(out) + L-glutamine(in). The catalysed reaction is L-aspartate(in) + L-methionine(out) = L-aspartate(out) + L-methionine(in). The enzyme catalyses L-leucine(out) + L-aspartate(in) = L-leucine(in) + L-aspartate(out). It catalyses the reaction L-valine(out) + L-aspartate(in) = L-valine(in) + L-aspartate(out). It carries out the reaction L-aspartate(in) + L-phenylalanine(out) = L-aspartate(out) + L-phenylalanine(in). The catalysed reaction is L-tyrosine(out) + L-aspartate(in) = L-tyrosine(in) + L-aspartate(out). The enzyme catalyses L-tryptophan(out) + L-aspartate(in) = L-tryptophan(in) + L-aspartate(out). Associates with SLC3A1/rBAT to form a functional heterodimeric complex that transports anionic and neutral amino acids across the apical plasma membrane of renal epithelium. Preferentially mediates exchange transport, but can also operate via facilitated diffusion. May act as a major transporter for L-cystine in late proximal tubules, ensuring its reabsorption from the luminal fluid in exchange for cytosolic L-glutamate or L-aspartate. This chain is Solute carrier family 7 member 13, found in Mus musculus (Mouse).